Reading from the N-terminus, the 243-residue chain is 3,4-dihydroxyphthalate decarboxylase (243 aa).

E86 (proton donor/acceptor) is an active-site residue. 4 residues coordinate a divalent metal cation: E86, H105, H107, and H173.

It belongs to the aldolase class II family. The cofactor is a divalent metal cation.

It catalyses the reaction 3,4-dihydroxyphthalate + H(+) = 3,4-dihydroxybenzoate + CO2. It functions in the pathway xenobiotic degradation; phthalate degradation. Catalyzes the decarboxylation of 3,4-dihydroxyphthalate to protocatechuate (3,4-dihydroxybenzoate) during phthalate metabolism. This Rhodococcus jostii (strain RHA1) protein is 3,4-dihydroxyphthalate decarboxylase.